Reading from the N-terminus, the 420-residue chain is MDLHSYMQDLGRAARAASRELARADTRTKNAALLAMADAIERDAAKLLAANADDVKAAVAAGLAPAMVDRLTLTEKTVAGMAEGLRQIASLPDPVGEMGEFAYRPSGIQLGKMRVPLGVIGIIYEARPNVTADAAGLCLKAGNACILRGGSEAFRSNQAIAACVHEGLAAASLPTAAVQVLETTDRAAVGLLITMPEYVDVIVPRGGKGLIARISAEARVPVIKHLDGNCHTYVDVDADLEKALPVCDNAKTQRYGTCNTMETLLVHEVVAEAFLPAICQVYLDKGVELRGCATTRALIGADKVQPATEEDWLTEYAAPILAIKVIDSLDTAISHINHYGSHHTDVIITENYSSARRFLREVDSSSVMVNASSRFADGFEYGLGAEIGISTDKIHARGPVGLKGLTSEKWIVFGDGQVRG.

This sequence belongs to the gamma-glutamyl phosphate reductase family.

The protein resides in the cytoplasm. The enzyme catalyses L-glutamate 5-semialdehyde + phosphate + NADP(+) = L-glutamyl 5-phosphate + NADPH + H(+). Its pathway is amino-acid biosynthesis; L-proline biosynthesis; L-glutamate 5-semialdehyde from L-glutamate: step 2/2. Its function is as follows. Catalyzes the NADPH-dependent reduction of L-glutamate 5-phosphate into L-glutamate 5-semialdehyde and phosphate. The product spontaneously undergoes cyclization to form 1-pyrroline-5-carboxylate. The chain is Gamma-glutamyl phosphate reductase from Laribacter hongkongensis (strain HLHK9).